A 424-amino-acid polypeptide reads, in one-letter code: UPF0229 protein ECA2349 (424 aa).

Residues 53-111 form a disordered region; that stretch reads SIPNADINEPMFHQGRGGHRHRVHPGNDHFVQNDKIERPQGGGGSGSGQGDASKDGEGD. The span at 77 to 90 shows a compositional bias: basic and acidic residues; it reads PGNDHFVQNDKIER. Residues 92-101 show a composition bias toward gly residues; it reads QGGGGSGSGQ.

This sequence belongs to the UPF0229 family.

This chain is UPF0229 protein ECA2349, found in Pectobacterium atrosepticum (strain SCRI 1043 / ATCC BAA-672) (Erwinia carotovora subsp. atroseptica).